The sequence spans 174 residues: Micrococcal nuclease (174 aa).

The N-terminal stretch at 1–23 (MKSALAALRAVAAAVVLIVSVPA) is a signal peptide. Active-site residues include Arg52, Glu60, and Arg94.

This sequence belongs to the thermonuclease family.

It carries out the reaction Endonucleolytic cleavage to nucleoside 3'-phosphates and 3'-phosphooligonucleotide end-products.. The protein is Micrococcal nuclease (nuc) of Shigella flexneri.